Here is a 72-residue protein sequence, read N- to C-terminus: Translation initiation factor IF-1 (72 aa).

The S1-like domain occupies 2 to 72; sequence AKEDVIEVEG…TRGRITYRYK (71 aa). Tyrosine 60 carries the phosphotyrosine modification.

It belongs to the IF-1 family. Component of the 30S ribosomal translation pre-initiation complex which assembles on the 30S ribosome in the order IF-2 and IF-3, IF-1 and N-formylmethionyl-tRNA(fMet); mRNA recruitment can occur at any time during PIC assembly.

The protein localises to the cytoplasm. One of the essential components for the initiation of protein synthesis. Stabilizes the binding of IF-2 and IF-3 on the 30S subunit to which N-formylmethionyl-tRNA(fMet) subsequently binds. Helps modulate mRNA selection, yielding the 30S pre-initiation complex (PIC). Upon addition of the 50S ribosomal subunit IF-1, IF-2 and IF-3 are released leaving the mature 70S translation initiation complex. The polypeptide is Translation initiation factor IF-1 (Halalkalibacterium halodurans (strain ATCC BAA-125 / DSM 18197 / FERM 7344 / JCM 9153 / C-125) (Bacillus halodurans)).